A 508-amino-acid chain; its full sequence is Argininosuccinate lyase (508 aa).

Belongs to the lyase 1 family. Argininosuccinate lyase subfamily.

The protein localises to the cytoplasm. It catalyses the reaction 2-(N(omega)-L-arginino)succinate = fumarate + L-arginine. Its pathway is amino-acid biosynthesis; L-arginine biosynthesis; L-arginine from L-ornithine and carbamoyl phosphate: step 3/3. The chain is Argininosuccinate lyase from Methanopyrus kandleri (strain AV19 / DSM 6324 / JCM 9639 / NBRC 100938).